The primary structure comprises 286 residues: Apoptosis inhibitor 1 (286 aa).

2 BIR repeats span residues 29 to 96 (LIER…CAYA) and 131 to 199 (LQSR…CYFV). 4 residues coordinate Zn(2+): cysteine 169, cysteine 172, histidine 189, and cysteine 196. The RING-type zinc-finger motif lies at 238 to 274 (CKVCLERQRDAVLMPCRHFCVCVQCYFGLDQKCPTCR).

In terms of biological role, acts by blocking cellular apoptosis early in infection. Later, stimulates caspase-3-like protease activity and induces apoptosis, probably to favor the release of occluded virions. The sequence is that of Apoptosis inhibitor 1 (IAP1) from Lepidoptera (butterflies and moths).